The sequence spans 99 residues: Ubiquitin-related modifier 1 homolog (99 aa).

Glycine 99 carries the 1-thioglycine modification. A Glycyl lysine isopeptide (Gly-Lys) (interchain with K-? in acceptor proteins) cross-link involves residue glycine 99.

The protein belongs to the URM1 family. C-terminal thiocarboxylation occurs in 2 steps, it is first acyl-adenylated (-COAMP) via the hesA/moeB/thiF part of the MOCS3 homolog, then thiocarboxylated (-COSH) via the rhodanese domain of the MOCS3 homolog.

It localises to the cytoplasm. Its pathway is tRNA modification; 5-methoxycarbonylmethyl-2-thiouridine-tRNA biosynthesis. Acts as a sulfur carrier required for 2-thiolation of mcm(5)S(2)U at tRNA wobble positions of cytosolic tRNA(Lys), tRNA(Glu) and tRNA(Gln). Serves as sulfur donor in tRNA 2-thiolation reaction by being thiocarboxylated (-COSH) at its C-terminus by MOCS3. The sulfur is then transferred to tRNA to form 2-thiolation of mcm(5)S(2)U. Also acts as a ubiquitin-like protein (UBL) that is covalently conjugated via an isopeptide bond to lysine residues of target proteins. The thiocarboxylated form serves as substrate for conjugation and oxidative stress specifically induces the formation of UBL-protein conjugates. The sequence is that of Ubiquitin-related modifier 1 homolog from Chlamydomonas reinhardtii (Chlamydomonas smithii).